The sequence spans 366 residues: Beta-1,3-glucan-binding protein (366 aa).

An N-terminal signal peptide occupies residues 1–17 (MKGFVASVVLLACGALA). In terms of domain architecture, GH16 spans 18-364 (ADIVEPEDCT…YVRVWKMEST (347 aa)). The N-linked (GlcNAc...) asparagine glycan is linked to N66.

The protein belongs to the glycosyl hydrolase 16 family. As to expression, constitutively expressed in hemocytes.

It is found in the secreted. In terms of biological role, binds to beta-1,3-glucan. May play a role in recognition of microorganisms and in activation of the prophenoloxidase cascade. The protein is Beta-1,3-glucan-binding protein of Penaeus monodon (Giant tiger prawn).